Consider the following 208-residue polypeptide: Large ribosomal subunit protein uL3 (208 aa).

An N5-methylglutamine modification is found at Gln-150.

The protein belongs to the universal ribosomal protein uL3 family. In terms of assembly, part of the 50S ribosomal subunit. Forms a cluster with proteins L14 and L19. In terms of processing, methylated by PrmB.

In terms of biological role, one of the primary rRNA binding proteins, it binds directly near the 3'-end of the 23S rRNA, where it nucleates assembly of the 50S subunit. This is Large ribosomal subunit protein uL3 from Buchnera aphidicola subsp. Cinara cedri (strain Cc).